The primary structure comprises 577 residues: Zinc finger-containing ubiquitin peptidase 1 (577 aa).

The C2H2-type 1 zinc finger occupies 2 to 24 (LSCNICGETVNSEPDMKAHLIVH). Residues 29–52 (IICPFCKLSGINYNEICFHIETVH) form a C2H2-type 2; atypical zinc finger. Positions 124–137 (ESRKYQKSREKKPG) are enriched in basic and acidic residues. Positions 124-145 (ESRKYQKSREKKPGLSEAQGSI) are disordered. The C2H2-type 3; atypical zinc-finger motif lies at 153-176 (PECPFCGKIEGCSQDMEIHVKTKH). The C2H2-type 4 zinc-finger motif lies at 192–214 (YDCPMCGLVCTNYHILQEHVDLH). An MIU region spans residues 225–247 (DRVQCSSDRELAHRLQQEEDRKR). A disordered region spans residues 238–260 (RLQQEEDRKRKSEESRQEREEFQ). The interval 248–273 (KSEESRQEREEFQKLQRQYGLDNSGG) is zUBD/ZHA. At Lys261 the chain carries N6-acetyllysine. The active-site Nucleophile is Cys359. The active-site Proton acceptor is His490. Asp511 is a catalytic residue.

It belongs to the peptidase C78 family. ZUFSP subfamily. As to quaternary structure, interacts with RPA1 and RPA2.

It localises to the cytoplasm. The protein resides in the nucleus. It carries out the reaction Thiol-dependent hydrolysis of ester, thioester, amide, peptide and isopeptide bonds formed by the C-terminal Gly of ubiquitin (a 76-residue protein attached to proteins as an intracellular targeting signal).. Functionally, deubiquitinase with endodeubiquitinase activity that specifically interacts with and cleaves 'Lys-63'-linked long polyubiquitin chains. Shows only weak activity against 'Lys-11' and 'Lys-48'-linked chains. Plays an important role in genome stability pathways, functioning to prevent spontaneous DNA damage and also promote cellular survival in response to exogenous DNA damage. Modulates the ubiquitination status of replication protein A (RPA) complex proteins in response to replication stress. This chain is Zinc finger-containing ubiquitin peptidase 1, found in Mus musculus (Mouse).